Reading from the N-terminus, the 242-residue chain is Polycomb group RING finger protein 3 (242 aa).

The RING-type zinc finger occupies 17–56; it reads CRLCNGYLIDATTVTECLHTFCRSCLVKYLEENNTCPTCR. The interval 120–149 is disordered; that stretch reads EAHRNGETKTDEHTHKEPPEEKQEEDHDYH.

Component of a PRC1-like complex.

The protein localises to the nucleus. Component of a Polycomb group (PcG) multiprotein PRC1-like complex, a complex class required to maintain the transcriptionally repressive state of many genes, including Hox genes, throughout development. PcG PRC1 complex acts via chromatin remodeling and modification of histones; it mediates monoubiquitination of histone H2A 'Lys-119', rendering chromatin heritably changed in its expressibility. Within the PRC1-like complex, regulates RNF2 ubiquitin ligase activity. This chain is Polycomb group RING finger protein 3 (pcgf3), found in Xenopus tropicalis (Western clawed frog).